Here is a 1452-residue protein sequence, read N- to C-terminus: Pleiotropic drug resistance protein 1 (1452 aa).

Residues 152–425 (LNYLHILPNR…FEYMGFICPE (274 aa)) form the ABC transporter 1 domain. Residue 185–192 (GPPSSGKT) coordinates ATP. The ABC transmembrane type-2 1 domain occupies 504-716 (LLKACTAREY…AQNAIAVNEF (213 aa)). The next 7 helical transmembrane spans lie at 521–541 (FVYIFKMIQLTLMASITMTLF), 554–574 (GAVFLGALFYALIMIMFNGFS), 609–629 (IPITLVEVAIWVCMTYYVIGF), 640–660 (LLLLICVNQMASGLFRLMGAL), 664–684 (IIVANTFGSFVLLTVLVMGGF), 694–714 (WWIWGYWISPMMYAQNAIAVN), and 753–773 (IGAGALIGYVFLFNFLFAVAL). The segment at 808-830 (LGKSSSEKGNDVRRSASSRSMSS) is disordered. Positions 812 to 821 (SSEKGNDVRR) are enriched in basic and acidic residues. The ABC transporter 2 domain occupies 855 to 1107 (ITFDDIRYAV…HLIKYFEGID (253 aa)). 900 to 907 (GVSGAGKT) contributes to the ATP binding site. In terms of domain architecture, ABC transmembrane type-2 2 spans 1180-1394 (TQCMACFWKQ…TLYGLIASQF (215 aa)). A run of 7 helical transmembrane segments spans residues 1199-1219 (YTAVRIMFTFFIALMFGTIFW), 1239-1259 (YIAVLFLGVQNATTVQPVIAI), 1287-1307 (LPYLFLQTIIYGVIVYAMIGF), 1314-1334 (FFWYLFFMYFTLLYFTLYGMM), 1344-1364 (IAAIISSAFYAVWNLFCGFIV), 1375-1395 (WYYYICPISWTLYGLIASQFG), and 1421-1441 (FVGYVALILVGISVLFLFIFA).

It belongs to the ABC transporter superfamily. ABCG family. PDR (TC 3.A.1.205) subfamily. In terms of tissue distribution, expressed in root hypodermal passage cells. Expressed in stem tissues, particularly the vasculature and nodes adjacent to leaf axils.

The protein localises to the cell membrane. In terms of biological role, cellular strigolactone (SL) transporter required for the exudation of SL from the root to the soil. The presence of SL in the vicinity of the roots is required for development of symbiotic interactions with arbuscular mycorrhizal fungi (AMF). Transports SL in the above ground tissues and is required for the control of shoot branching. SL regulates plant shoot architecture by inhibiting the outgrowth of axillary buds. Involved in the regulation of shootward and outward directional strigolactone transport in roots. Due to its polar localization in root cells, mediates directional shootward strigolactone transport, as well as localized outward directional transport for exudation to the soil. This is Pleiotropic drug resistance protein 1 from Petunia hybrida (Petunia).